Reading from the N-terminus, the 394-residue chain is Xylose isomerase (394 aa).

Active-site residues include His-54 and Asp-57. Glu-180, Glu-216, His-219, Asp-244, Asp-254, Asp-256, and Asp-285 together coordinate Mg(2+). The interval 370–394 is disordered; that stretch reads VRTPRPAGDGPPAGRARLTVAPRKR. Residues 373–386 show a composition bias toward low complexity; sequence PRPAGDGPPAGRAR.

This sequence belongs to the xylose isomerase family. In terms of assembly, homotetramer. The cofactor is Mg(2+).

Its subcellular location is the cytoplasm. It carries out the reaction alpha-D-xylose = alpha-D-xylulofuranose. Involved in D-xylose catabolism. In Streptomyces rochei (Streptomyces parvullus), this protein is Xylose isomerase (xylA).